Here is a 389-residue protein sequence, read N- to C-terminus: Phospho-N-acetylmuramoyl-pentapeptide-transferase (389 aa).

10 consecutive transmembrane segments (helical) span residues 25-45 (RAVM…PWVI), 73-93 (TMGG…WGDL), 97-117 (FIWI…VDDY), 135-155 (FWQS…VSEA), 190-210 (ISYP…IVGA), 222-242 (GLVI…AYVM), 258-278 (GAGE…AFLW), 286-306 (VFMG…VAVI), 311-331 (IVLF…MLQV), and 366-386 (QVVV…LSTL).

It belongs to the glycosyltransferase 4 family. MraY subfamily. It depends on Mg(2+) as a cofactor.

It localises to the cell inner membrane. The enzyme catalyses UDP-N-acetyl-alpha-D-muramoyl-L-alanyl-gamma-D-glutamyl-meso-2,6-diaminopimeloyl-D-alanyl-D-alanine + di-trans,octa-cis-undecaprenyl phosphate = di-trans,octa-cis-undecaprenyl diphospho-N-acetyl-alpha-D-muramoyl-L-alanyl-D-glutamyl-meso-2,6-diaminopimeloyl-D-alanyl-D-alanine + UMP. Its pathway is cell wall biogenesis; peptidoglycan biosynthesis. Catalyzes the initial step of the lipid cycle reactions in the biosynthesis of the cell wall peptidoglycan: transfers peptidoglycan precursor phospho-MurNAc-pentapeptide from UDP-MurNAc-pentapeptide onto the lipid carrier undecaprenyl phosphate, yielding undecaprenyl-pyrophosphoryl-MurNAc-pentapeptide, known as lipid I. The chain is Phospho-N-acetylmuramoyl-pentapeptide-transferase from Burkholderia ambifaria (strain ATCC BAA-244 / DSM 16087 / CCUG 44356 / LMG 19182 / AMMD) (Burkholderia cepacia (strain AMMD)).